Consider the following 253-residue polypeptide: Phosphoribosylaminoimidazole-succinocarboxamide synthase (253 aa).

The protein belongs to the SAICAR synthetase family.

The enzyme catalyses 5-amino-1-(5-phospho-D-ribosyl)imidazole-4-carboxylate + L-aspartate + ATP = (2S)-2-[5-amino-1-(5-phospho-beta-D-ribosyl)imidazole-4-carboxamido]succinate + ADP + phosphate + 2 H(+). It functions in the pathway purine metabolism; IMP biosynthesis via de novo pathway; 5-amino-1-(5-phospho-D-ribosyl)imidazole-4-carboxamide from 5-amino-1-(5-phospho-D-ribosyl)imidazole-4-carboxylate: step 1/2. In Jannaschia sp. (strain CCS1), this protein is Phosphoribosylaminoimidazole-succinocarboxamide synthase.